A 36-amino-acid chain; its full sequence is U14-myrmicitoxin-Tb1a (36 aa).

A signal peptide spans 1 to 23; it reads MKIIKLITIFTMMATLMXXVANG. Residues 24–25 constitute a propeptide that is removed on maturation; sequence EP. Q35 carries the glutamine amide modification.

Expressed by the venom gland.

Its subcellular location is the secreted. Its function is as follows. Venom protein with unknown function. Does not induce paralysis when a high dose is administered by intrathoracic injection into the blowfly Lucilia caesar. The protein is U14-myrmicitoxin-Tb1a of Tetramorium bicarinatum (Tramp ant).